The chain runs to 209 residues: Ribosomal RNA large subunit methyltransferase E (209 aa).

The S-adenosyl-L-methionine site is built by Gly63, Trp65, Asp83, Asp99, and Asp124. Residue Lys164 is the Proton acceptor of the active site.

The protein belongs to the class I-like SAM-binding methyltransferase superfamily. RNA methyltransferase RlmE family.

It is found in the cytoplasm. It carries out the reaction uridine(2552) in 23S rRNA + S-adenosyl-L-methionine = 2'-O-methyluridine(2552) in 23S rRNA + S-adenosyl-L-homocysteine + H(+). Specifically methylates the uridine in position 2552 of 23S rRNA at the 2'-O position of the ribose in the fully assembled 50S ribosomal subunit. This is Ribosomal RNA large subunit methyltransferase E from Shewanella denitrificans (strain OS217 / ATCC BAA-1090 / DSM 15013).